The following is a 396-amino-acid chain: 1-deoxy-D-xylulose 5-phosphate reductoisomerase (396 aa).

8 residues coordinate NADPH: T10, G11, S12, I13, G36, K37, N38, and N124. Residue K125 coordinates 1-deoxy-D-xylulose 5-phosphate. NADPH is bound at residue E126. D150 provides a ligand contact to Mn(2+). 1-deoxy-D-xylulose 5-phosphate-binding residues include S151, E152, S186, and H209. E152 provides a ligand contact to Mn(2+). G215 is a binding site for NADPH. 1-deoxy-D-xylulose 5-phosphate contacts are provided by S222, N227, K228, and E231. E231 provides a ligand contact to Mn(2+).

This sequence belongs to the DXR family. Requires Mg(2+) as cofactor. Mn(2+) serves as cofactor.

The enzyme catalyses 2-C-methyl-D-erythritol 4-phosphate + NADP(+) = 1-deoxy-D-xylulose 5-phosphate + NADPH + H(+). It participates in isoprenoid biosynthesis; isopentenyl diphosphate biosynthesis via DXP pathway; isopentenyl diphosphate from 1-deoxy-D-xylulose 5-phosphate: step 1/6. Its function is as follows. Catalyzes the NADPH-dependent rearrangement and reduction of 1-deoxy-D-xylulose-5-phosphate (DXP) to 2-C-methyl-D-erythritol 4-phosphate (MEP). This Actinobacillus pleuropneumoniae serotype 3 (strain JL03) protein is 1-deoxy-D-xylulose 5-phosphate reductoisomerase.